Here is a 282-residue protein sequence, read N- to C-terminus: Putative hydrolase BamMC406_5393 (282 aa).

Positions 124, 126, and 155 each coordinate Mg(2+).

The protein belongs to the FAH family. It depends on Mg(2+) as a cofactor.

This Burkholderia ambifaria (strain MC40-6) protein is Putative hydrolase BamMC406_5393.